The following is a 382-amino-acid chain: Gap junction alpha-1 protein (382 aa).

Topologically, residues 2 to 23 are cytoplasmic; sequence GDWSALGKLLDKVQAYSTAGGK. S5 carries the post-translational modification Phosphoserine. The helical transmembrane segment at 24 to 44 threads the bilayer; sequence VWLSVLFIFRILLLGTAVESA. Residues 45-76 are Extracellular-facing; the sequence is WGDEQSAFRCNTQQPGCENVCYDKSFPISHVR. 2 cysteine pairs are disulfide-bonded: C54–C192 and C187–C198. Residues 77–97 traverse the membrane as a helical segment; it reads FWVLQIIFVSVPTLLYLAHVF. Residues 98–155 are Cytoplasmic-facing; that stretch reads YVMRKEEKLNKKEEELKVAQTDGVNVDMHLKQIEIKKFKYGIEEHGKVKMRGGLLRTY. K144 is covalently cross-linked (Glycyl lysine isopeptide (Lys-Gly) (interchain with G-Cter in SUMO)). A helical membrane pass occupies residues 156–176; it reads IISILFKSIFEVAFLLIQWYI. Over 177–207 the chain is Extracellular; sequence YGFSLSAVYTCKRDPCPHQVDCFLSRPTEKT. The helical transmembrane segment at 208–228 threads the bilayer; the sequence is IFIIFMLVVSLVSLALNIIEL. Over 229–382 the chain is Cytoplasmic; it reads FYVFFKGVKD…SRPRPDDLEI (154 aa). A Glycyl lysine isopeptide (Lys-Gly) (interchain with G-Cter in SUMO) cross-link involves residue K237. The interaction with NOV stretch occupies residues 244–382; it reads SDPYHATSGA…SRPRPDDLEI (139 aa). The residue at position 247 (Y247) is a Phosphotyrosine. Phosphoserine occurs at positions 255 and 262. The segment at 264-382 is interaction with UBQLN4; the sequence is KYAYFNGCSS…SRPRPDDLEI (119 aa). S-nitrosocysteine is present on C271. The residue at position 275 (T275) is a Phosphothreonine. Phosphoserine is present on residues S306 and S314. Positions 317 to 332 are enriched in polar residues; sequence QNRMGQAGSTISNSHA. Residues 317-382 are disordered; the sequence is QNRMGQAGST…SRPRPDDLEI (66 aa). S325 bears the Phosphoserine; by CK1 mark. Position 326 is a phosphothreonine (T326). Residues S328 and S330 each carry the phosphoserine; by CK1 modification. A phosphoserine mark is found at S344 and S365. Residues 362-374 are compositionally biased toward low complexity; that stretch reads RPSSRASSRASSR. S368 bears the Phosphoserine; by PKC/PRKCG and PKC/PRKCD mark. Residues S369 and S373 each carry the phosphoserine modification.

This sequence belongs to the connexin family. Alpha-type (group II) subfamily. In terms of assembly, a connexon is composed of a hexamer of connexins. Interacts (via C-terminus) with TJP1. Interacts (via C-terminus) with SRC (via SH3 domain). Interacts (not ubiquitinated) with UBQLN4 (via UBA domain). Interacts with SGSM3 and CNST. Interacts with RIC1/CIP150. Interacts with CSNK1D. Interacts with NOV. Interacts with TMEM65. Interacts with ANK3/ANKG and PKP2. In terms of processing, phosphorylated at Ser-368 by PRKCG; phosphorylation induces disassembly of gap junction plaques and inhibition of gap junction activity. Phosphorylation at Ser-325, Ser-328 and Ser-330 by CK1 modulates gap junction assembly. Phosphorylation at Ser-368 by PRKCD triggers its internalization into small vesicles leading to proteasome-mediated degradation. Sumoylated with SUMO1, SUMO2 and SUMO3, which may regulate the level of functional Cx43 gap junctions at the plasma membrane. May be desumoylated by SENP1 or SENP2. Post-translationally, S-nitrosylation at Cys-271 is enriched at the muscle endothelial gap junction in arteries, it augments channel permeability and may regulate of smooth muscle cell to endothelial cell communication. In terms of processing, acetylated in the developing cortex; leading to delocalization from the cell membrane. Expressed at intercalated disks in the heart (at protein level). Expressed in the fetal cochlea.

The protein resides in the cell membrane. Its subcellular location is the cell junction. It is found in the gap junction. It localises to the endoplasmic reticulum. Gap junction protein that acts as a regulator of bladder capacity. A gap junction consists of a cluster of closely packed pairs of transmembrane channels, the connexons, through which materials of low MW diffuse from one cell to a neighboring cell. May play a critical role in the physiology of hearing by participating in the recycling of potassium to the cochlear endolymph. Negative regulator of bladder functional capacity: acts by enhancing intercellular electrical and chemical transmission, thus sensitizing bladder muscles to cholinergic neural stimuli and causing them to contract. May play a role in cell growth inhibition through the regulation of NOV expression and localization. Plays an essential role in gap junction communication in the ventricles. The chain is Gap junction alpha-1 protein (GJA1) from Homo sapiens (Human).